Reading from the N-terminus, the 219-residue chain is Protein-L-isoaspartate O-methyltransferase (219 aa).

Ser64 is a catalytic residue.

It belongs to the methyltransferase superfamily. L-isoaspartyl/D-aspartyl protein methyltransferase family.

The protein localises to the cytoplasm. The enzyme catalyses [protein]-L-isoaspartate + S-adenosyl-L-methionine = [protein]-L-isoaspartate alpha-methyl ester + S-adenosyl-L-homocysteine. Catalyzes the methyl esterification of L-isoaspartyl residues in peptides and proteins that result from spontaneous decomposition of normal L-aspartyl and L-asparaginyl residues. It plays a role in the repair and/or degradation of damaged proteins. This chain is Protein-L-isoaspartate O-methyltransferase, found in Chlorobaculum parvum (strain DSM 263 / NCIMB 8327) (Chlorobium vibrioforme subsp. thiosulfatophilum).